A 209-amino-acid chain; its full sequence is Uracil phosphoribosyltransferase (209 aa).

5-phospho-alpha-D-ribose 1-diphosphate is bound by residues Arg79, Arg104, and 131–139; that span reads DPMLATGGS. Uracil contacts are provided by residues Ile194 and 199–201; that span reads GDA. Asp200 lines the 5-phospho-alpha-D-ribose 1-diphosphate pocket.

This sequence belongs to the UPRTase family. The cofactor is Mg(2+).

It catalyses the reaction UMP + diphosphate = 5-phospho-alpha-D-ribose 1-diphosphate + uracil. It participates in pyrimidine metabolism; UMP biosynthesis via salvage pathway; UMP from uracil: step 1/1. With respect to regulation, allosterically activated by GTP. Its function is as follows. Catalyzes the conversion of uracil and 5-phospho-alpha-D-ribose 1-diphosphate (PRPP) to UMP and diphosphate. This Streptococcus agalactiae serotype III (strain NEM316) protein is Uracil phosphoribosyltransferase.